A 645-amino-acid chain; its full sequence is Cyclic nucleotide-gated channel rod photoreceptor subunit alpha (645 aa).

At 1 to 121 (MKVGVIETHH…PAGNMYYNWL (121 aa)) the chain is on the cytoplasmic side. The segment at 53–100 (NNNSNKDEEKKKKKEKKSKSENKKDGERQKNKEKKEKHKNKDKKKGKE) is disordered. Basic and acidic residues predominate over residues 70 to 86 (SKSENKKDGERQKNKEK). Over residues 87–96 (KEKHKNKDKK) the composition is skewed to basic residues. The helical transmembrane segment at 122–143 (FCITMPVMYNWTMIIARACFDE) threads the bilayer. At 144-153 (LQNDYLAVWF) the chain is on the extracellular side. The chain crosses the membrane as a helical span at residues 154-174 (IVDYVSDVIYIADMFVRTRTG). The Cytoplasmic portion of the chain corresponds to 175–199 (YLEQGLLVKEEQKLKEKYKSSLQFK). A helical transmembrane segment spans residues 200-218 (LDFLSIIPTDLLYFKLGLN). Over 219-223 (YPELR) the chain is Extracellular. Residues 224–242 (INRLLRVARMFEFFQRTET) traverse the membrane as a helical segment. Topologically, residues 243–249 (RTNYPNI) are cytoplasmic. Residues 250–273 (FRISNLVMYIVIIIHWNACVYYSI) traverse the membrane as a helical segment. Residues 274–296 (SKAIGFGADTWVYPNTSHPEFAR) are Extracellular-facing. A run of 2 helical transmembrane segments spans residues 297–331 (LTRK…FFVV) and 332–356 (VDFL…SNMN). Residues 357 to 645 (AARAEFQAKI…TDKPGVTKTE (289 aa)) are Cytoplasmic-facing. Residues 439 to 561 (LLVE…DGLL), Glu-498, and Arg-513 contribute to the 3',5'-cyclic GMP site.

It belongs to the cyclic nucleotide-gated cation channel (TC 1.A.1.5) family.

Its subcellular location is the membrane. In terms of biological role, visual signal transduction is mediated by a G-protein coupled cascade using cGMP as second messenger. This protein can be activated by cGMP which leads to an opening of the cation channel and thereby causing a depolarization of rod photoreceptors. This is Cyclic nucleotide-gated channel rod photoreceptor subunit alpha from Gallus gallus (Chicken).